Here is an 84-residue protein sequence, read N- to C-terminus: MPVKEKVGIVVSNKMQKTIVVKVESRYSHPIYSKTMTKTRKYLAHDEMGECNIGDQVLVQECRPLSKRKRWTLSKVLSKSSLVS.

It belongs to the universal ribosomal protein uS17 family. In terms of assembly, part of the 30S ribosomal subunit.

It localises to the plastid. It is found in the chloroplast. One of the primary rRNA binding proteins, it binds specifically to the 5'-end of 16S ribosomal RNA. The chain is Small ribosomal subunit protein uS17c (rps17) from Trieres chinensis (Marine centric diatom).